Consider the following 914-residue polypeptide: WAG22 antigen (914 aa).

The PE domain maps to 1-93 (MSFVIAVPET…GGAYAAAEAA (93 aa)). Disordered stretches follow at residues 412–431 (GGSG…AGGA) and 895–914 (AGAG…HGLT). A compositionally biased stretch (gly residues) spans 895–904 (AGAGGAGGLV).

It belongs to the mycobacterial PE family. PGRS subfamily.

The protein is WAG22 antigen (wag22) of Mycobacterium bovis (strain ATCC BAA-935 / AF2122/97).